The following is a 199-amino-acid chain: MKAQSSVLPVVVGILVVIIAVAVGVYVYNQYVMLSSPSASSSTGTSTGPSKISIPYSSSNKTVFLTIVVESSSNVNQFNFNGTSSGSLVIYIPAGSTVIVKFINQESLPHNLVLLQNSTPTPQSPEISSDGKIIDIVGATTSNYDVNGISGGASAEGVWGPISAGDYMLVCGILGHAASGMWAVLVASNNVTAPYAVID.

Residues 7-27 traverse the membrane as a helical; Signal-anchor for type II membrane protein segment; it reads VLPVVVGILVVIIAVAVGVYV. A Plastocyanin-like domain is found at 79 to 188; that stretch reads NFNGTSSGSL…SGMWAVLVAS (110 aa). Residues His110, Cys171, His176, and Met181 each coordinate Cu cation.

It belongs to the multicopper oxidase family.

The protein localises to the cell membrane. The 4 redox proteins SoxE, SoxF, SoxG and SoxH probably form part of a membrane respiratory complex together with SoxM, a catalytic subunit of cytochrome oxidase. In Sulfolobus acidocaldarius (strain ATCC 33909 / DSM 639 / JCM 8929 / NBRC 15157 / NCIMB 11770), this protein is Sulfocyanin (soxE).